The chain runs to 319 residues: RWD domain-containing protein 2B (319 aa).

The region spanning 41 to 165 (SELDLLASMF…EWVREHASGY (125 aa)) is the RWD domain. Ser-275 carries the phosphoserine modification.

The chain is RWD domain-containing protein 2B (RWDD2B) from Pongo abelii (Sumatran orangutan).